A 248-amino-acid chain; its full sequence is Small ribosomal subunit protein uS3 (248 aa).

Positions 38–106 constitute a KH type-2 domain; the sequence is IREFLSKGLD…QVALNILEVK (69 aa). Residues 214 to 230 show a composition bias toward basic and acidic residues; that stretch reads SEINAPAERRGRGDRNA. The interval 214-248 is disordered; the sequence is SEINAPAERRGRGDRNARPRRGGQRRQRAEQKQEG.

It belongs to the universal ribosomal protein uS3 family. As to quaternary structure, part of the 30S ribosomal subunit. Forms a tight complex with proteins S10 and S14.

Functionally, binds the lower part of the 30S subunit head. Binds mRNA in the 70S ribosome, positioning it for translation. In Corynebacterium glutamicum (strain R), this protein is Small ribosomal subunit protein uS3.